An 86-amino-acid polypeptide reads, in one-letter code: RNA-binding protein Hfq (86 aa).

The Sm domain occupies 9–68 (DPFLNALRRERIPVSIYLVNGIKLQGQIESFDQFVILLKNTVNQMVYKHAISTVVPARPV). The segment at 65–86 (ARPVSHHSGERGSDRPSEKSED) is disordered. The span at 71–86 (HSGERGSDRPSEKSED) shows a compositional bias: basic and acidic residues.

This sequence belongs to the Hfq family. In terms of assembly, homohexamer.

In terms of biological role, RNA chaperone that binds small regulatory RNA (sRNAs) and mRNAs to facilitate mRNA translational regulation in response to envelope stress, environmental stress and changes in metabolite concentrations. Also binds with high specificity to tRNAs. The protein is RNA-binding protein Hfq of Vibrio vulnificus (strain YJ016).